The following is a 965-amino-acid chain: PWWP domain-containing protein 4 (965 aa).

The PWWP domain occupies 135–196; sequence VGDMVWGKVK…PAELIPFEPH (62 aa). Residues 437–455 show a composition bias toward polar residues; sequence MNFTSSSGNIPGKKSSVSK. Disordered stretches follow at residues 437–507, 526–577, 649–708, and 905–927; these read MNFT…KSSL, VVKR…KSSQ, SAKT…SLAP, and LSSQ…PPLD. 2 stretches are compositionally biased toward basic and acidic residues: residues 456–474 and 481–495; these read LSRD…RMGE and DQEK…KQDE. Residues 496-507 show a composition bias toward polar residues; it reads TGTNSRSNKSSL. The Nuclear localization signal signature appears at 546 to 553; the sequence is KKKEYVSE. Positions 549-563 are enriched in basic and acidic residues; sequence EYVSELNRDTPDKRK. Residues 657–676 show a composition bias toward polar residues; sequence NEQSKAGRNRISSDSQQDVP. The segment covering 691–702 has biased composition (basic and acidic residues); it reads ASDKKTNQDATK. Polar residues predominate over residues 905–919; it reads LSSQDSEPKPVNNQV.

The protein belongs to the PDP family. As to quaternary structure, component of the PRC2 (polycomb repressive complex 2) complex which regulates histone methylation on histone H3K27.

The protein resides in the nucleus. May influence gene expression by regulating the function of the PRC2 complex and modulating H3K27me3 level. The protein is PWWP domain-containing protein 4 of Arabidopsis thaliana (Mouse-ear cress).